We begin with the raw amino-acid sequence, 151 residues long: SsrA-binding protein (151 aa).

Positions 132–151 (KRQTIKKRDQDREIHRKYGI) are disordered.

This sequence belongs to the SmpB family.

It is found in the cytoplasm. Functionally, required for rescue of stalled ribosomes mediated by trans-translation. Binds to transfer-messenger RNA (tmRNA), required for stable association of tmRNA with ribosomes. tmRNA and SmpB together mimic tRNA shape, replacing the anticodon stem-loop with SmpB. tmRNA is encoded by the ssrA gene; the 2 termini fold to resemble tRNA(Ala) and it encodes a 'tag peptide', a short internal open reading frame. During trans-translation Ala-aminoacylated tmRNA acts like a tRNA, entering the A-site of stalled ribosomes, displacing the stalled mRNA. The ribosome then switches to translate the ORF on the tmRNA; the nascent peptide is terminated with the 'tag peptide' encoded by the tmRNA and targeted for degradation. The ribosome is freed to recommence translation, which seems to be the essential function of trans-translation. This is SsrA-binding protein from Lactobacillus gasseri (strain ATCC 33323 / DSM 20243 / BCRC 14619 / CIP 102991 / JCM 1131 / KCTC 3163 / NCIMB 11718 / NCTC 13722 / AM63).